A 196-amino-acid chain; its full sequence is Probable malonic semialdehyde reductase RutE (196 aa).

The protein belongs to the nitroreductase family. HadB/RutE subfamily. FMN is required as a cofactor.

It carries out the reaction 3-hydroxypropanoate + NADP(+) = 3-oxopropanoate + NADPH + H(+). In terms of biological role, may reduce toxic product malonic semialdehyde to 3-hydroxypropionic acid, which is excreted. The sequence is that of Probable malonic semialdehyde reductase RutE from Escherichia coli O8 (strain IAI1).